Consider the following 101-residue polypeptide: Small ribosomal subunit protein uS14 (101 aa).

The protein belongs to the universal ribosomal protein uS14 family. Part of the 30S ribosomal subunit. Contacts proteins S3 and S10.

Functionally, binds 16S rRNA, required for the assembly of 30S particles and may also be responsible for determining the conformation of the 16S rRNA at the A site. The chain is Small ribosomal subunit protein uS14 from Haemophilus influenzae (strain PittGG).